Consider the following 273-residue polypeptide: Putative peptidyl-prolyl cis-trans isomerase Cbf2 (273 aa).

An N-terminal signal peptide occupies residues 1–21 (MKKFSLVAAALIAGVALNVNA). A PpiC domain is found at 131–228 (PARVQAKHIL…FGYHVILKEN (98 aa)).

The enzyme catalyses [protein]-peptidylproline (omega=180) = [protein]-peptidylproline (omega=0). This is Putative peptidyl-prolyl cis-trans isomerase Cbf2 (cbf2) from Campylobacter jejuni subsp. jejuni serotype O:23/36 (strain 81-176).